The sequence spans 196 residues: Small ribosomal subunit protein uS4c (196 aa).

Residues 16 to 40 are disordered; it reads GALPGLTRKTPKSGSNLKKKFHSGK. Positions 89-152 constitute an S4 RNA-binding domain; the sequence is MRLDNTLFRL…RSKDLVRNSI (64 aa).

Belongs to the universal ribosomal protein uS4 family. In terms of assembly, part of the 30S ribosomal subunit. Contacts protein S5. The interaction surface between S4 and S5 is involved in control of translational fidelity.

It is found in the plastid. Its subcellular location is the chloroplast. In terms of biological role, one of the primary rRNA binding proteins, it binds directly to 16S rRNA where it nucleates assembly of the body of the 30S subunit. Its function is as follows. With S5 and S12 plays an important role in translational accuracy. This is Small ribosomal subunit protein uS4c (rps4) from Anthoxanthum odoratum (Sweet vernal grass).